The primary structure comprises 393 residues: DNA-directed RNA polymerase subunit Rpo1C (393 aa).

It belongs to the RNA polymerase beta' chain family. In terms of assembly, part of the RNA polymerase complex.

It localises to the cytoplasm. The catalysed reaction is RNA(n) + a ribonucleoside 5'-triphosphate = RNA(n+1) + diphosphate. In terms of biological role, DNA-dependent RNA polymerase (RNAP) catalyzes the transcription of DNA into RNA using the four ribonucleoside triphosphates as substrates. Forms part of the jaw domain. The protein is DNA-directed RNA polymerase subunit Rpo1C of Thermococcus celer.